The primary structure comprises 326 residues: DNA-directed RNA polymerase subunit alpha (326 aa).

Residues 1–230 (MLKIEKQAKA…LHLDPFLEIG (230 aa)) form an alpha N-terminal domain (alpha-NTD) region. An alpha C-terminal domain (alpha-CTD) region spans residues 249 to 326 (DIQVIDDKSH…YDLEKNGSPE (78 aa)).

It belongs to the RNA polymerase alpha chain family. As to quaternary structure, homodimer. The RNAP catalytic core consists of 2 alpha, 1 beta, 1 beta' and 1 omega subunit. When a sigma factor is associated with the core the holoenzyme is formed, which can initiate transcription.

The catalysed reaction is RNA(n) + a ribonucleoside 5'-triphosphate = RNA(n+1) + diphosphate. DNA-dependent RNA polymerase catalyzes the transcription of DNA into RNA using the four ribonucleoside triphosphates as substrates. The polypeptide is DNA-directed RNA polymerase subunit alpha (Fusobacterium nucleatum subsp. nucleatum (strain ATCC 25586 / DSM 15643 / BCRC 10681 / CIP 101130 / JCM 8532 / KCTC 2640 / LMG 13131 / VPI 4355)).